Consider the following 311-residue polypeptide: Malate dehydrogenase (311 aa).

NAD(+)-binding positions include 7-13 (GAAGGIG) and D34. R81 and R87 together coordinate substrate. NAD(+) is bound by residues N94 and 117 to 119 (ITN). Residues N119 and R153 each coordinate substrate. The Proton acceptor role is filled by H177. NAD(+) is bound at residue M227.

This sequence belongs to the LDH/MDH superfamily. MDH type 1 family. Homodimer.

It catalyses the reaction (S)-malate + NAD(+) = oxaloacetate + NADH + H(+). In terms of biological role, catalyzes the reversible oxidation of malate to oxaloacetate. The sequence is that of Malate dehydrogenase from Haemophilus influenzae (strain PittGG).